The following is a 127-amino-acid chain: Glycine cleavage system H protein (127 aa).

One can recognise a Lipoyl-binding domain in the interval 22 to 104 (AVVIGITHFA…YEGAWMVKVE (83 aa)). An N6-lipoyllysine modification is found at lysine 63.

The protein belongs to the GcvH family. The glycine cleavage system is composed of four proteins: P, T, L and H. Requires (R)-lipoate as cofactor.

Functionally, the glycine cleavage system catalyzes the degradation of glycine. The H protein shuttles the methylamine group of glycine from the P protein to the T protein. Its function is as follows. Is also involved in protein lipoylation via its role as an octanoyl/lipoyl carrier protein intermediate. The chain is Glycine cleavage system H protein from Bacillus mycoides (strain KBAB4) (Bacillus weihenstephanensis).